The chain runs to 748 residues: Polyribonucleotide nucleotidyltransferase (748 aa).

Positions 487 and 493 each coordinate Mg(2+). In terms of domain architecture, KH spans 554–613; the sequence is PSTTTIKIDKDKIRDIIGPGGKVIKEICETSGAKIDISDDGTVSVYASDRDKLKVALDKI. In terms of domain architecture, S1 motif spans 623–691; that stretch reads GEIFNGTVVK…NKGKAKLTIK (69 aa). Residues 695–733 are disordered; sequence KDKFSNNTKPKTSVNNTKDNSEPEQRHDSSKKRAWNEDN. Over residues 699-712 the composition is skewed to polar residues; it reads SNNTKPKTSVNNTK. Positions 713–722 are enriched in basic and acidic residues; sequence DNSEPEQRHD.

This sequence belongs to the polyribonucleotide nucleotidyltransferase family. The cofactor is Mg(2+).

It is found in the cytoplasm. The catalysed reaction is RNA(n+1) + phosphate = RNA(n) + a ribonucleoside 5'-diphosphate. In terms of biological role, involved in mRNA degradation. Catalyzes the phosphorolysis of single-stranded polyribonucleotides processively in the 3'- to 5'-direction. This is Polyribonucleotide nucleotidyltransferase from Rickettsia rickettsii (strain Iowa).